The sequence spans 524 residues: Probable malate:quinone oxidoreductase (524 aa).

It belongs to the MQO family. The cofactor is FAD.

The enzyme catalyses (S)-malate + a quinone = a quinol + oxaloacetate. It participates in carbohydrate metabolism; tricarboxylic acid cycle; oxaloacetate from (S)-malate (quinone route): step 1/1. In Blochmanniella floridana, this protein is Probable malate:quinone oxidoreductase.